The sequence spans 226 residues: Adenylate kinase (226 aa).

ATP is bound at residue 11 to 16 (GSGKGT). Residues 31–64 (SAGEILKHALSVTKFHFNFNTDNMLNQINSGNLV) are NMP. AMP is bound by residues 62–64 (NLV), 90–93 (GFPR), and Gln97. The tract at residues 127–164 (GRQVHIKSGRTYHIKFNPPKLDGIDDITGEKLVIRADD) is LID. Residues Arg128 and 137–138 (TY) contribute to the ATP site. Residues Arg161 and Arg172 each coordinate AMP. ATP is bound at residue Gln205.

The protein belongs to the adenylate kinase family. Monomer.

It localises to the cytoplasm. The enzyme catalyses AMP + ATP = 2 ADP. The protein operates within purine metabolism; AMP biosynthesis via salvage pathway; AMP from ADP: step 1/1. Its function is as follows. Catalyzes the reversible transfer of the terminal phosphate group between ATP and AMP. Plays an important role in cellular energy homeostasis and in adenine nucleotide metabolism. This Blochmanniella floridana protein is Adenylate kinase.